The primary structure comprises 768 residues: Putative calcium up-regulated protein H (768 aa).

The tract at residues 1-22 is disordered; the sequence is MINIEDISKSSNQSEEKQLKST. 2 Ricin B-type lectin domains span residues 25-145 and 116-248; these read KPKY…WTTF and QGNG…WGIN.

The protein belongs to the cup family.

The protein localises to the cytoplasm. It localises to the membrane. May play an important role in stabilizing and/or regulating the cell membrane during Ca(2+) stress or certain stages of development. This chain is Putative calcium up-regulated protein H (cupH), found in Dictyostelium discoideum (Social amoeba).